The following is an 876-amino-acid chain: Nitrogen regulatory protein areA (876 aa).

Residues 1–11 (MSGLTLGGGSG) show a composition bias toward gly residues. 6 disordered regions span residues 1-65 (MSGL…PTDS), 137-159 (QERERAQQQARASSQKSPVPGMS), 192-248 (IPFS…ESEF), 393-413 (FSPPPSGYQSTASTPQPAYDG), 451-498 (YMYN…PNEF), and 573-672 (SADM…GPTT). Polar residues-rich tracts occupy residues 198 to 211 (DHPSPSTTKASEAT), 399 to 408 (GYQSTASTPQ), and 455 to 480 (QGGSSQDITQQNAHMGAQSSSMQSPG). A compositionally biased stretch (basic and acidic residues) spans 602–611 (VRNRDQDPRR). The segment covering 615–640 (ARTSSTPNTAQLLRQSMQNQSSHTSP) has biased composition (polar residues). The segment at 673–697 (CTNCFTQTTPLWRRNPEGQPLCNAC) adopts a GATA-type zinc-finger fold. Positions 721-742 (NRNSANSLAVGSSRVSKKSARK) form a DNA-binding region, H-T-H motif. Polar residues-rich tracts occupy residues 724–734 (SANSLAVGSSR) and 742–766 (KNSVQQVTPTAPTSSRAQSNTTSES). The disordered stretch occupies residues 724 to 856 (SANSLAVGSS…MPPAAVNPAN (133 aa)). Low complexity-rich tracts occupy residues 782 to 798 (PIAAAPPKSSSAATTSP) and 828 to 855 (SPSSTSSGGRSKVVPLAPAMPPAAVNPA).

Interacts with nmrA.

Its subcellular location is the nucleus. In terms of biological role, transcription activator that binds the consensus DNA element 5'-CGATAG-3' and mediates nitrogen metabolite repression. Activates the transcription of uapA. This chain is Nitrogen regulatory protein areA (areA), found in Emericella nidulans (strain FGSC A4 / ATCC 38163 / CBS 112.46 / NRRL 194 / M139) (Aspergillus nidulans).